The primary structure comprises 185 residues: Adenine phosphoribosyltransferase (185 aa).

This sequence belongs to the purine/pyrimidine phosphoribosyltransferase family. Homodimer.

The protein localises to the cytoplasm. The catalysed reaction is AMP + diphosphate = 5-phospho-alpha-D-ribose 1-diphosphate + adenine. It functions in the pathway purine metabolism; AMP biosynthesis via salvage pathway; AMP from adenine: step 1/1. Catalyzes a salvage reaction resulting in the formation of AMP, that is energically less costly than de novo synthesis. This is Adenine phosphoribosyltransferase from Pectobacterium atrosepticum (strain SCRI 1043 / ATCC BAA-672) (Erwinia carotovora subsp. atroseptica).